The chain runs to 212 residues: MNIFRFLGDISHLSAIIILLLKIWKSRSCAGISGKSQLLFAIVFTTRYLDLFTNFISFYNTSMKVVYVASSYATVWMIYSKFKATYDGNHDTFRVEFLIVPTAILSFLVNHDFTPLEILWTFSIYLESVAILPQLFMVSKTGEAETITSHYLFALGIYRTLYLFNWIWRYQFEEFFDLIAIVAGLVQTVLYCDFFYLYITKVLKGKKLSLPA.

At 1–4 (MNIF) the chain is on the lumenal side. The chain crosses the membrane as a helical span at residues 5-24 (RFLGDISHLSAIIILLLKIW). Residues 25–32 (KSRSCAGI) are Cytoplasmic-facing. A helical transmembrane segment spans residues 33–52 (SGKSQLLFAIVFTTRYLDLF). An interaction with the K-D-E-L motif on target proteins region spans residues 47-48 (RY). The Lumenal segment spans residues 53–58 (TNFISF). A helical membrane pass occupies residues 59-79 (YNTSMKVVYVASSYATVWMIY). Residues 80–92 (SKFKATYDGNHDT) lie on the Cytoplasmic side of the membrane. Residues 93-110 (FRVEFLIVPTAILSFLVN) traverse the membrane as a helical segment. The Lumenal segment spans residues 111–116 (HDFTPL). The chain crosses the membrane as a helical span at residues 117–135 (EILWTFSIYLESVAILPQL). At 136-149 (FMVSKTGEAETITS) the chain is on the cytoplasmic side. The chain crosses the membrane as a helical span at residues 150–168 (HYLFALGIYRTLYLFNWIW). The tract at residues 159 to 169 (RTLYLFNWIWR) is interaction with the K-D-E-L motif on target proteins. Residues 169–178 (RYQFEEFFDL) lie on the Lumenal side of the membrane. The helical transmembrane segment at 179–199 (IAIVAGLVQTVLYCDFFYLYI) threads the bilayer. Topologically, residues 200–212 (TKVLKGKKLSLPA) are cytoplasmic. Residues 204-207 (KGKK) are important for recycling of cargo proteins with the sequence motif K-D-E-L from the Golgi to the endoplasmic reticulum.

This sequence belongs to the ERD2 family.

Its subcellular location is the golgi apparatus membrane. The protein localises to the cytoplasmic vesicle. It is found in the COPI-coated vesicle membrane. The protein resides in the endoplasmic reticulum membrane. It localises to the endoplasmic reticulum-Golgi intermediate compartment membrane. Functionally, receptor for the C-terminal sequence motif K-D-E-L that is present on endoplasmic reticulum resident proteins and that mediates their recycling from the Golgi back to the endoplasmic reticulum. In Xenopus laevis (African clawed frog), this protein is ER lumen protein-retaining receptor 1-B (kdelr1-b).